Reading from the N-terminus, the 193-residue chain is MLLLLLPLLLAAVLTRTQADPVPRATRLPVEAKDCHIAQFKSLSPKELQAFKKAKDAIEKRLLEKDLRCSSHLFPRAWDLKQLQVQERPKALQAEVALTLKVWENMTDSALATILGQPLHTLSHIHSQLQTCTQLQATAEPRSPSRRLSRWLHRLQEAQSKETPGCLEASVTSNLFRLLTRDLKCVANGDQCV.

Residues 1 to 19 (MLLLLLPLLLAAVLTRTQA) form the signal peptide. Asn105 carries N-linked (GlcNAc...) asparagine glycosylation.

This sequence belongs to the lambda interferon family.

The protein localises to the secreted. Cytokine with antiviral, antitumour and immunomodulatory activities. Plays a critical role in the antiviral host defense, predominantly in the epithelial tissues. Acts as a ligand for the heterodimeric class II cytokine receptor composed of IL10RB and IFNLR1, and receptor engagement leads to the activation of the JAK/STAT signaling pathway resulting in the expression of IFN-stimulated genes (ISG), which mediate the antiviral state. Has a restricted receptor distribution and therefore restricted targets: is primarily active in epithelial cells and this cell type-selective action is because of the epithelial cell-specific expression of its receptor IFNLR1. Seems not to be essential for early virus-activated host defense in vaginal infection, but plays an important role in Toll-like receptor (TLR)-induced antiviral defense. Plays a significant role in the antiviral immune defense in the intestinal epithelium. Exerts an immunomodulatory effect by up-regulating MHC class I antigen expression. The protein is Interferon lambda-2 (Ifnl2) of Mus musculus (Mouse).